Here is a 224-residue protein sequence, read N- to C-terminus: Glutathione S-transferase U8 (224 aa).

The GST N-terminal domain maps to 5–85 (EHVKLLGLWG…YIEDTWKTTH (81 aa)). Residues 15-16 (SP), 42-43 (NR), 56-57 (KV), and 69-70 (ES) each bind glutathione. The GST C-terminal domain maps to 91–213 (DPYERAMARF…LPPKEKLVAV (123 aa)). Thr-152 is subject to Phosphothreonine.

Belongs to the GST superfamily. Tau family.

The protein localises to the cytoplasm. It localises to the cytosol. It catalyses the reaction RX + glutathione = an S-substituted glutathione + a halide anion + H(+). Functionally, may be involved in the conjugation of reduced glutathione to a wide number of exogenous and endogenous hydrophobic electrophiles and have a detoxification role against certain herbicides. This is Glutathione S-transferase U8 (GSTU8) from Arabidopsis thaliana (Mouse-ear cress).